A 150-amino-acid polypeptide reads, in one-letter code: UPF0756 membrane protein plu2726 (150 aa).

4 helical membrane-spanning segments follow: residues 8–28 (LLVL…TVTL), 51–71 (YGLT…IASG), 88–108 (LLAI…VSLM), and 123–143 (VLGV…AGIL).

This sequence belongs to the UPF0756 family.

The protein resides in the cell membrane. The chain is UPF0756 membrane protein plu2726 from Photorhabdus laumondii subsp. laumondii (strain DSM 15139 / CIP 105565 / TT01) (Photorhabdus luminescens subsp. laumondii).